A 476-amino-acid polypeptide reads, in one-letter code: Transposase for transposon Tn5 (476 aa).

Residues 1-70 (MITSALHRAA…YRFIRNPNVS (70 aa)) form an interaction with DNA region. Mg(2+) contacts are provided by aspartate 97 and aspartate 188. Interaction with DNA stretches follow at residues 237 to 255 (YQIS…KRKN) and 319 to 348 (YTHR…EPDN). Residue glutamate 326 participates in Mg(2+) binding. An important for dimerization region spans residues 369 to 476 (SFTLPQALRA…KDLMAQGIKI (108 aa)).

The protein belongs to the transposase 11 family. Monomer. Homodimer of tnp (isoform 1), and heterodimer of tnp (isoform 1) and inh (isoform 2). The cofactor is Mg(2+).

Mediates transposition of transposon Tn5 by a 'cut and paste' mechanism. First, the monomeric transposase binds the 19 bp inverted DNA repeats flanking the transposon. Then, dimerization of the DNA-bound transposase creates a synaptic DNA complex. After nicking of the first DNA strand, excision of the transposon proceeds through a series of intermediates. The transposase then mediates the insertion of the transposon at a new site by strand transfer. The activity of the wild-type transposase is very low, and is further inhibited by dimerization with the transposase inhibitor (inh). This chain is Transposase for transposon Tn5 (tnpA), found in Escherichia coli.